A 1529-amino-acid polypeptide reads, in one-letter code: Mediator of RNA polymerase II transcription subunit 1.1 (1529 aa).

Disordered stretches follow at residues 685 to 740 (PDAA…VVGE), 807 to 919 (QYRM…MRDN), and 933 to 1529 (PDIE…IDDE). Residues 693–702 (GKQRKPRAKK) show a composition bias toward basic residues. Low complexity-rich tracts occupy residues 722 to 739 (GAAA…GVVG) and 807 to 828 (QYRM…PQQQ). Pro residues predominate over residues 894 to 905 (TPSPLSAPPKPF). The segment covering 908-919 (EQHHFGTKMRDN) has biased composition (basic and acidic residues). Low complexity-rich tracts occupy residues 958-990 (SSSS…TAQT) and 1008-1023 (QEQA…IQQQ). Residues 1008–1032 (QEQALQKQEQQRIQQQDSVDSTNSE) are a coiled coil. Polar residues-rich tracts occupy residues 1051-1061 (NQVNRVMNMSN), 1068-1089 (GSST…STGS), and 1096-1105 (TPGTSSNIAQ). Composition is skewed to basic and acidic residues over residues 1113 to 1130 (LKKE…EKLI), 1137 to 1185 (LKVD…ERDK), 1192 to 1240 (RDRT…KELS), and 1262 to 1278 (PKKD…KDES). Positions 1169–1202 (EKEDKSQREKDKKERDKERKRRDRDRTEAKKEKD) form a coiled coil. The span at 1279-1288 (IPGPSTSSES) shows a compositional bias: low complexity. Residues 1289–1304 (STRKEVAPAPISRKES) show a composition bias toward basic and acidic residues. The segment covering 1349-1365 (SYSGSSNAGPISSSSRG) has biased composition (low complexity). 2 stretches are compositionally biased toward pro residues: residues 1375–1386 (PVLPPPALPMRG) and 1477–1500 (QPPP…APPS).

It belongs to the Mediator complex subunit 1 family. Component of the Mediator complex.

It localises to the nucleus. Its function is as follows. Component of the Mediator complex, a coactivator involved in the regulated transcription of nearly all RNA polymerase II-dependent genes. Mediator functions as a bridge to convey information from gene-specific regulatory proteins to the basal RNA polymerase II transcription machinery. Mediator is recruited to promoters by direct interactions with regulatory proteins and serves as a scaffold for the assembly of a functional preinitiation complex with RNA polymerase II and the general transcription factors. This Caenorhabditis briggsae protein is Mediator of RNA polymerase II transcription subunit 1.1 (sop-3).